The sequence spans 218 residues: Small ribosomal subunit protein uS3c (218 aa).

A KH type-2 domain is found at 47–118 (VQKNMRTSSG…KLNIAVTRIA (72 aa)).

The protein belongs to the universal ribosomal protein uS3 family. Part of the 30S ribosomal subunit.

The protein resides in the plastid. It localises to the chloroplast. This is Small ribosomal subunit protein uS3c (rps3) from Atropa belladonna (Belladonna).